A 116-amino-acid chain; its full sequence is Transmembrane protein 213 (116 aa).

An N-terminal signal peptide occupies residues 1–35 (MAQSGVFLRNPGHLTSAPQAALLFSLVLTSFHLSC). The Extracellular segment spans residues 36 to 79 (GTETSSSNSTLSAHHPDPGTLEQCANVDFCPLASLCCRASVDEY). Residues 80–100 (GWIAAAVGWSFWFLTLILLCV) traverse the membrane as a helical segment. Over 101–116 (DKLMKLTPEEPKDLAA) the chain is Cytoplasmic.

It is found in the membrane. The protein is Transmembrane protein 213 (Tmem213) of Mus musculus (Mouse).